The primary structure comprises 197 residues: Ribosome maturation factor RimP (197 aa).

The protein belongs to the RimP family.

It is found in the cytoplasm. Required for maturation of 30S ribosomal subunits. This Acidovorax sp. (strain JS42) protein is Ribosome maturation factor RimP.